A 313-amino-acid chain; its full sequence is Hsp90 co-chaperone Cdc37-like 1 (313 aa).

Belongs to the CDC37 family. As to quaternary structure, forms complexes with Hsp70 and Hsp90.

Its subcellular location is the cytoplasm. Functionally, co-chaperone that binds to numerous proteins and promotes their interaction with Hsp70 and Hsp90. This chain is Hsp90 co-chaperone Cdc37-like 1 (cdc37l1), found in Danio rerio (Zebrafish).